Here is a 247-residue protein sequence, read N- to C-terminus: 4-nitrobenzoate reductase (247 aa).

Residue 29 to 33 coordinates FMN; that stretch reads RRSVR. NADP(+)-binding residues include S59, R112, Y120, and L126. FMN is bound at residue R232.

It belongs to the nitroreductase family. FMN serves as cofactor.

It carries out the reaction 4-nitrobenzoate + 2 NADPH + 2 H(+) = 4-hydroxylaminobenzoate + 2 NADP(+) + H2O. Nitroreductase involved in the degradation of nitroaromatic compounds. Catalyzes the conversion of 4-nitrobenzoate to 4-hydroxylaminobenzoate. This chain is 4-nitrobenzoate reductase, found in Nocardioides sp. (strain LMS-CY).